Reading from the N-terminus, the 452-residue chain is Ribosomal protein uS12 methylthiotransferase RimO (452 aa).

The MTTase N-terminal domain occupies 3-118 (GKIGFVSLGC…VMQAIHLHLP (116 aa)). Residues Cys-12, Cys-48, Cys-77, Cys-149, Cys-153, and Cys-156 each contribute to the [4Fe-4S] cluster site. The region spanning 135–381 (LTPKHYAYLK…MAKAEDISIK (247 aa)) is the Radical SAM core domain. The TRAM domain occupies 384-452 (AKKIGKRVQV…SQGHDLIAET (69 aa)).

Belongs to the methylthiotransferase family. RimO subfamily. [4Fe-4S] cluster serves as cofactor.

The protein resides in the cytoplasm. The enzyme catalyses L-aspartate(89)-[ribosomal protein uS12]-hydrogen + (sulfur carrier)-SH + AH2 + 2 S-adenosyl-L-methionine = 3-methylsulfanyl-L-aspartate(89)-[ribosomal protein uS12]-hydrogen + (sulfur carrier)-H + 5'-deoxyadenosine + L-methionine + A + S-adenosyl-L-homocysteine + 2 H(+). In terms of biological role, catalyzes the methylthiolation of an aspartic acid residue of ribosomal protein uS12. This is Ribosomal protein uS12 methylthiotransferase RimO from Polynucleobacter asymbioticus (strain DSM 18221 / CIP 109841 / QLW-P1DMWA-1) (Polynucleobacter necessarius subsp. asymbioticus).